Reading from the N-terminus, the 347-residue chain is N-acetyl-gamma-glutamyl-phosphate reductase (347 aa).

The active site involves cysteine 152.

It belongs to the NAGSA dehydrogenase family. Type 1 subfamily.

Its subcellular location is the cytoplasm. The catalysed reaction is N-acetyl-L-glutamate 5-semialdehyde + phosphate + NADP(+) = N-acetyl-L-glutamyl 5-phosphate + NADPH + H(+). Its pathway is amino-acid biosynthesis; L-arginine biosynthesis; N(2)-acetyl-L-ornithine from L-glutamate: step 3/4. Its function is as follows. Catalyzes the NADPH-dependent reduction of N-acetyl-5-glutamyl phosphate to yield N-acetyl-L-glutamate 5-semialdehyde. The polypeptide is N-acetyl-gamma-glutamyl-phosphate reductase (Neisseria meningitidis serogroup A / serotype 4A (strain DSM 15465 / Z2491)).